The primary structure comprises 1867 residues: MTSRVSRLDRQVILIETGSTQVVRNMAADQMGDLAKQHPEDILSLLSRVYPFLLVKKWETRVTAARAVGGIVAHAPSWDPNESDLVGGTNEGSPLDNAQVKLEHEMKIKLEEATQNNQLNLLQEDHHLSSLSDWKLNEILKSGKVLLASSMNDYNVLGKADDNIRKQAKTDDIKQETSMLNASDKANENKSNANKKSARMLAMARRKKKMSAKNTPKHPVDITESSVSKTLLNGKNMTNSAASLATSPTSNQLNPKLEITEQADESKLMIESTVRPLLEQHEIVAGLVWQFQGIYELLLDNLMSENWEIRHGAALGLRELVKKHAYGVSRVKGNTREENNLRNSRSLEDLASRLLTVFALDRFGDYVYDTVVAPVRESVAQTLAALLIHLDSTLSIKIFNCLEQLVLQDPLQTGLPNKIWEATHGGLLGIRYFVSIKTNFLFAHGLLENVVRIVLYGLNQSDDDVQSVAASILTPITSEFVKLNNSTIEILVTTIWSLLARLDDDISSSVGSIMDLLAKLCDHQEVLDILKNKALEHPSEWSFKSLVPKLYPFLRHSISSVRRAVLNLLIAFLSIKDDSTKNWLNGKVFRLVFQNILLEQNPELLQLSFDVYVALLEHYKVKHTEKTLDHVFSKHLQPILHLLNTPVGEKGKNYAMESQYILKPSQHYQLHPEKKRSISETTTDSDIPIPKNNEHINIDAPMIAGDITLLGLDVILNTRIMGAKAFALTLSMFQDSTLQSFFTNVLVRCLELPFSTPRMLAGIIVSQFCSSWLQKHPEGEKLPSFVSEIFSPVMNKQLLNRDEFPVFRELVPSLKALRTQCQSLLATFVDVGMLPQYKLPNVAIVVQGETEAGPHAFGVETAEKVYGEYYDKMFKSMNNSYKLLAKKPLEDSKHRVLMAINSAKESAKLRTGSILANYASSILLFDGLPLKLNPIIRSLMDSVKEERNEKLQTMAGESVVHLIQQLLENNKVNVSGKIVKNLCGFLCVDTSEVPDFSVNAEYKEKILTLIKESNSIAAQDDINLAKMSEEAQLKRKGGLITLKILFEVLGPSILQKLPQLRSILFDSLSDHENEEASKVDNEQGQKIVDSFGVLRALFPFMSDSLRSSEVFTRFPVLLTFLRSNLSVFRYSAARTFADLAKISSVEVMAYTIREILPLMNSAGSLSDRQGSTELIYHLSLSMETDVLPYVIFLIVPLLGRMSDSNEDVRNLATTTFASIIKLVPLEAGIADPKGLPEELVASRERERDFIQQMMDPSKAKPFKLPIAIKATLRKYQQDGVNWLAFLNKYHLHGILCDDMGLGKTLQTICIIASDQYLRKEDYEKTRSVESRALPSLIICPPSLTGHWENEFDQYAPFLKVVVYAGGPTVRLTLRPQLSDADIIVTSYDVARNDLAVLNKTEYNYCVLDEGHIIKNSQSKLAKAVKEITANHRLILTGTPIQNNVLELWSLFDFLMPGFLGTEKMFQERFAKPIAASRNSKTSSKEQEAGVLALEALHKQVLPFMLRRLKEDVLSDLPPKIIQDYYCELGDLQKQLYMDFTKKQKNVVEKDIENSEIADGKQHIFQALQYMRKLCNHPALVLSPNHPQLAQVQDYLKQTGLDLHDIINAPKLSALRTLLFECGIGEEDIDKKASQDQNFPIQNVISQHRALIFCQLKDMLDMVENDLFKKYMPSVTYMRLDGSIDPRDRQKVVRKFNEDPSIDCLLLTTKVGGLGLNLTGADTVIFVEHDWNPMNDLQAMDRAHRIGQKKVVNVYRIITKGTLEEKIMGLQKFKMNIASTVVNQQNSGLASMDTHQLLDLFDPDNVTSQDNEEKNNGDSQAAKGMEDIANETGLTGKAKEALGELKELWDPSQYEEEYNLDTFIKTLR.

The residue at position 93 (S93) is a Phosphoserine. Residues 169 to 228 are disordered; that stretch reads KTDDIKQETSMLNASDKANENKSNANKKSARMLAMARRKKKMSAKNTPKHPVDITESSVS. Residues 181 to 203 show a composition bias toward low complexity; sequence NASDKANENKSNANKKSARMLAM. A Nuclear localization signal motif is present at residues 195 to 211; sequence KKSARMLAMARRKKKMS. 3 HEAT repeats span residues 289–326, 445–482, and 541–578; these read WQFQ…KHAY, GLLE…EFVK, and WSFK…IKDD. S677 is subject to Phosphoserine. HEAT repeat units lie at residues 1108-1145 and 1188-1225; these read SEVF…ISSV and PYVI…LVPL. A Helicase ATP-binding domain is found at 1284–1457; sequence AFLNKYHLHG…WSLFDFLMPG (174 aa). 1297 to 1304 is a binding site for ATP; sequence DDMGLGKT. A DEGH box motif is present at residues 1408 to 1411; that stretch reads DEGH. One copy of the HEAT 6 repeat lies at 1495 to 1537; it reads ALHKQVLPFMLRRLKEDVLSDLPPKIIQDYYCELGDLQKQLYM. A Helicase C-terminal domain is found at 1639 to 1787; sequence PIQNVISQHR…STVVNQQNSG (149 aa). The interval 1802-1822 is disordered; sequence PDNVTSQDNEEKNNGDSQAAK.

This sequence belongs to the SNF2/RAD54 helicase family. Forms a complex with TBP which binds TATA DNA with high affinity but with altered specificity.

It is found in the mitochondrion. The protein resides in the nucleus. Regulates transcription in association with TATA binding protein (TBP). Removes TBP from the TATA box via its C-terminal ATPase activity. Both transcription activation and repression require its ATPase activity. The chain is TATA-binding protein-associated factor MOT1 (MOT1) from Saccharomyces cerevisiae (strain ATCC 204508 / S288c) (Baker's yeast).